The chain runs to 65 residues: Large ribosomal subunit protein bL35 (65 aa).

Basic residues-rich tracts occupy residues methionine 1 to threonine 15 and glutamine 26 to leucine 44. The tract at residues methionine 1–alanine 65 is disordered.

It belongs to the bacterial ribosomal protein bL35 family.

The protein is Large ribosomal subunit protein bL35 of Ralstonia nicotianae (strain ATCC BAA-1114 / GMI1000) (Ralstonia solanacearum).